The sequence spans 336 residues: Phosphatidylglycerol--prolipoprotein diacylglyceryl transferase (336 aa).

The next 3 helical transmembrane spans lie at 16–36 (IGPVTIHFYALCILLGIVLAV), 53–73 (ILDITLVAVPSGIIGARIYHI), and 93–113 (IWNGGLGIWGGVLLGALAAWA). R141 contributes to the a 1,2-diacyl-sn-glycero-3-phospho-(1'-sn-glycerol) binding site. Transmembrane regions (helical) follow at residues 190-210 (PTFLYEMIWNLIGAALIVFLG), 220-240 (GSLFAIYIMWYTVGRTWIEAL), and 253-273 (INVWVSMAVFVLGVVAFIVIQ).

It belongs to the Lgt family.

Its subcellular location is the cell membrane. It catalyses the reaction L-cysteinyl-[prolipoprotein] + a 1,2-diacyl-sn-glycero-3-phospho-(1'-sn-glycerol) = an S-1,2-diacyl-sn-glyceryl-L-cysteinyl-[prolipoprotein] + sn-glycerol 1-phosphate + H(+). Its pathway is protein modification; lipoprotein biosynthesis (diacylglyceryl transfer). Catalyzes the transfer of the diacylglyceryl group from phosphatidylglycerol to the sulfhydryl group of the N-terminal cysteine of a prolipoprotein, the first step in the formation of mature lipoproteins. The chain is Phosphatidylglycerol--prolipoprotein diacylglyceryl transferase from Bifidobacterium adolescentis (strain ATCC 15703 / DSM 20083 / NCTC 11814 / E194a).